The following is a 338-amino-acid chain: Replication factor C small subunit (338 aa).

An ATP-binding site is contributed by 53–60; that stretch reads GPPGVGKT.

The protein belongs to the activator 1 small subunits family. RfcS subfamily. In terms of assembly, heteromultimer composed of small subunits (RfcS) and large subunits (RfcL).

Functionally, part of the RFC clamp loader complex which loads the PCNA sliding clamp onto DNA. This is Replication factor C small subunit from Methanosarcina acetivorans (strain ATCC 35395 / DSM 2834 / JCM 12185 / C2A).